We begin with the raw amino-acid sequence, 579 residues long: Mitochondrial distribution and morphology protein 31 (579 aa).

A mitochondrion-targeting transit peptide spans 1–47; that stretch reads MSLFTRPFLRSPRQFSVARYVYWARSPALRSNLRIPSIAAASLRAYS. Topologically, residues 48–114 are mitochondrial matrix; sequence NESKTGRDAP…SDDISAFISW (67 aa). Residues 115–135 form a helical membrane-spanning segment; that stretch reads ILVSNIFIFIFWTTTFVSLIL. The Mitochondrial intermembrane portion of the chain corresponds to 136–558; it reads YLINTVFAQE…DEKRTLRLRR (423 aa). Residues 559 to 578 traverse the membrane as a helical segment; sequence VGFWSLQLILQVILMSLGAI. Position 579 (Ala-579) is a topological domain, mitochondrial matrix.

This sequence belongs to the MDM31/MDM32 family. In terms of assembly, interacts with MDM32. Participates in a complex of about 600 kDa.

The protein resides in the mitochondrion inner membrane. Functionally, involved in the organization of the mitochondrial membranes and the global structure of the mitochondria. Also required for mitochondrial distribution and mobility as well as for the maintenance of mitochondrial DNA nucleoids structures. The sequence is that of Mitochondrial distribution and morphology protein 31 (MDM31) from Saccharomyces cerevisiae (strain ATCC 204508 / S288c) (Baker's yeast).